We begin with the raw amino-acid sequence, 338 residues long: Protein SPATA31F3 (338 aa).

Residues 7–29 (VLWDVGYPLYTYGSICIIALIIW) form a helical membrane-spanning segment. Residue Ser152 is modified to Phosphoserine. Positions 290 to 306 (DRTKNIEKSPTVTKDHV) are enriched in basic and acidic residues. Residues 290-338 (DRTKNIEKSPTVTKDHVWGATTQKTTEDPEAQPPSTEEEGLIFCDAPSA) form a disordered region.

This sequence belongs to the SPATA31 family.

Its subcellular location is the membrane. The sequence is that of Protein SPATA31F3 from Homo sapiens (Human).